Consider the following 127-residue polypeptide: MSNIPAELRFAESHEWARLEADGSVTVGISDHAQEALGDVVFVELAEVGKVFGAGDAAGVVESVKAASDIYAPVGGEVIAVNEELADSPELLNEEPYGSWIFKLKPSNPAELDKLLDAAGYQALIGE.

The Lipoyl-binding domain maps to 24-105 (SVTVGISDHA…PYGSWIFKLK (82 aa)). Lys65 bears the N6-lipoyllysine mark.

It belongs to the GcvH family. The glycine cleavage system is composed of four proteins: P, T, L and H. (R)-lipoate is required as a cofactor.

In terms of biological role, the glycine cleavage system catalyzes the degradation of glycine. The H protein shuttles the methylamine group of glycine from the P protein to the T protein. The protein is Glycine cleavage system H protein 2 of Pseudomonas putida (strain ATCC 47054 / DSM 6125 / CFBP 8728 / NCIMB 11950 / KT2440).